The chain runs to 400 residues: Mu-type opioid receptor (400 aa).

At 1–68 (MDSSAVPANA…CPPTGSPSMI (68 aa)) the chain is on the extracellular side. Residues N9, N12, N33, N40, and N48 are each glycosylated (N-linked (GlcNAc...) asparagine). The chain crosses the membrane as a helical span at residues 69-93 (TAITIMALYSIVCVVGLFGNFLVMY). Residues 94-106 (VIVRYTKMKTATN) lie on the Cytoplasmic side of the membrane. The helical transmembrane segment at 107 to 131 (IYIFNLALADALATSTLPFQSVNYL) threads the bilayer. At 132-142 (MGTWPFGTILC) the chain is on the extracellular side. C142 and C219 form a disulfide bridge. The chain crosses the membrane as a helical span at residues 143–165 (KIVISIDYYNMFTSIFTLCTMSV). At 166-185 (DRYIAVCHPVKALDFRTPRN) the chain is on the cytoplasmic side. Position 168 is a phosphotyrosine (Y168). A helical transmembrane segment spans residues 186 to 207 (AKIVNVCNWIISSAIGLPVMFM). Residues 208-230 (ATTKYRQGSIDCTLTFSHPTWYW) are Extracellular-facing. A helical membrane pass occupies residues 231 to 255 (ENLLKICVFIFAFIMPVLIITVCYG). Residues 256 to 279 (LMILRLKSVRMLSGSKEKDRNLRR) are Cytoplasmic-facing. Residues 280 to 306 (ITRMVLVVVAVFIVCWTPIHIYVIIKA) form a helical membrane-spanning segment. Residues 307–314 (LVTIPETT) lie on the Extracellular side of the membrane. Residues 315–338 (FQTVSWHFCIALGYTNSCLNPVLY) traverse the membrane as a helical segment. The NPxxY; plays a role in stabilizing the activated conformation of the receptor motif lies at 334–338 (NPVLY). Residues 339-400 (AFLDENFKRC…NLEAETAPLP (62 aa)) are Cytoplasmic-facing. Residue C353 is the site of S-palmitoyl cysteine attachment. Phosphoserine is present on S365. At T372 the chain carries Phosphothreonine. S377 is subject to Phosphoserine. T396 is modified (phosphothreonine).

This sequence belongs to the G-protein coupled receptor 1 family. As to quaternary structure, forms homooligomers and heterooligomers with other GPCRs, such as OPRD1, OPRK1, OPRL1, NPFFR2, ADRA2A, SSTR2, CNR1 and CCR5 (probably in dimeric forms). Interacts with heterotrimeric G proteins; interaction with a heterotrimeric complex containing GNAI1, GNB1 and GNG2 stabilizes the active conformation of the receptor and increases its affinity for endomorphin-2, the synthetic opioid peptide DAMGO and for morphinan agonists. Interacts with PPL; the interaction disrupts agonist-mediated G-protein activation. Interacts (via C-terminus) with DNAJB4 (via C-terminus). Interacts with calmodulin; the interaction inhibits the constitutive activity of OPRM1; it abolishes basal and attenuates agonist-stimulated G-protein coupling. Interacts with FLNA, PLD2, RANBP9 and WLS and GPM6A. Interacts with RTP4. Interacts with SYP and GNAS. Interacts with RGS9, RGS17, RGS20, RGS4, PPP1R9B and HINT1. In terms of processing, phosphorylated. Differentially phosphorylated in basal and agonist-induced conditions. Agonist-mediated phosphorylation modulates receptor internalization. Phosphorylated by GRK2 in a agonist-dependent manner. Phosphorylation at Tyr-168 requires receptor activation, is dependent on non-receptor protein tyrosine kinase Src and results in a decrease in agonist efficacy by reducing G-protein coupling efficiency. Phosphorylated on tyrosine residues; the phosphorylation is involved in agonist-induced G-protein-independent receptor down-regulation. Phosphorylation at Ser-377 is involved in G-protein-dependent but not beta-arrestin-dependent activation of the ERK pathway. Post-translationally, ubiquitinated. A basal ubiquitination seems not to be related to degradation. Ubiquitination is increased upon formation of OPRM1:OPRD1 oligomers leading to proteasomal degradation; the ubiquitination is diminished by RTP4.

The protein resides in the cell membrane. Its subcellular location is the cell projection. The protein localises to the axon. It localises to the perikaryon. It is found in the dendrite. The protein resides in the endosome. Its function is as follows. Receptor for endogenous opioids such as beta-endorphin and endomorphin. Receptor for natural and synthetic opioids including morphine, heroin, DAMGO, fentanyl, etorphine, buprenorphin and methadone. Also activated by enkephalin peptides, such as Met-enkephalin or Met-enkephalin-Arg-Phe, with higher affinity for Met-enkephalin-Arg-Phe. Agonist binding to the receptor induces coupling to an inactive GDP-bound heterotrimeric G-protein complex and subsequent exchange of GDP for GTP in the G-protein alpha subunit leading to dissociation of the G-protein complex with the free GTP-bound G-protein alpha and the G-protein beta-gamma dimer activating downstream cellular effectors. The agonist- and cell type-specific activity is predominantly coupled to pertussis toxin-sensitive G(i) and G(o) G alpha proteins, GNAI1, GNAI2, GNAI3 and GNAO1, and to a lesser extent to pertussis toxin-insensitive G alpha proteins GNAZ and GNA15. They mediate an array of downstream cellular responses, including inhibition of adenylate cyclase activity and both N-type and L-type calcium channels, activation of inward rectifying potassium channels, mitogen-activated protein kinase (MAPK), phospholipase C (PLC), phosphoinositide/protein kinase (PKC), phosphoinositide 3-kinase (PI3K) and regulation of NF-kappa-B. Also couples to adenylate cyclase stimulatory G alpha proteins. The selective temporal coupling to G-proteins and subsequent signaling can be regulated by RGSZ proteins, such as RGS9, RGS17 and RGS4. Phosphorylation by members of the GPRK subfamily of Ser/Thr protein kinases and association with beta-arrestins is involved in short-term receptor desensitization. Beta-arrestins associate with the GPRK-phosphorylated receptor and uncouple it from the G-protein thus terminating signal transduction. The phosphorylated receptor is internalized through endocytosis via clathrin-coated pits which involves beta-arrestins. The activation of the ERK pathway occurs either in a G-protein-dependent or a beta-arrestin-dependent manner and is regulated by agonist-specific receptor phosphorylation. Acts as a class A G-protein coupled receptor (GPCR) which dissociates from beta-arrestin at or near the plasma membrane and undergoes rapid recycling. Receptor down-regulation pathways are varying with the agonist and occur dependent or independent of G-protein coupling. Endogenous ligands induce rapid desensitization, endocytosis and recycling. Heterooligomerization with other GPCRs can modulate agonist binding, signaling and trafficking properties. Involved in neurogenesis. This chain is Mu-type opioid receptor (OPRM1), found in Saimiri boliviensis boliviensis (Bolivian squirrel monkey).